The sequence spans 185 residues: Regulatory protein RecX (185 aa).

It belongs to the RecX family.

It localises to the cytoplasm. In terms of biological role, modulates RecA activity. The polypeptide is Regulatory protein RecX (Thermobifida fusca (strain YX)).